Here is a 454-residue protein sequence, read N- to C-terminus: Putative serine carboxypeptidase-like 23 (454 aa).

A signal peptide spans 1-22; sequence MARIHLIIILLVISSTSSSSSS. 3 N-linked (GlcNAc...) asparagine glycosylation sites follow: Asn-52, Asn-102, and Asn-136. Intrachain disulfides connect Cys-85–Cys-338, Cys-247–Cys-258, and Cys-282–Cys-306. Residue Ser-178 is part of the active site. 2 N-linked (GlcNAc...) asparagine glycosylation sites follow: Asn-287 and Asn-327. Residues Asp-375 and His-427 contribute to the active site.

The protein belongs to the peptidase S10 family. As to expression, expression not detected.

Its subcellular location is the secreted. Functionally, probable carboxypeptidase. The chain is Putative serine carboxypeptidase-like 23 (SCPL23) from Arabidopsis thaliana (Mouse-ear cress).